The primary structure comprises 279 residues: Cytochrome c1 (279 aa).

The first 21 residues, 1–21, serve as a signal peptide directing secretion; the sequence is MKKLLISAVSALVLGSGAAFA. Heme c contacts are provided by cysteine 55, cysteine 58, histidine 59, and methionine 204. Residues 248-266 form a helical membrane-spanning segment; that stretch reads MGLVAMVMLGLLSVMLYLT.

As to quaternary structure, the main subunits of complex b-c1 are: cytochrome b, cytochrome c1 and the Rieske protein. Binds 1 heme c group covalently per subunit.

It is found in the cell membrane. In terms of biological role, component of the ubiquinol-cytochrome c reductase complex (complex III or cytochrome b-c1 complex), which is a respiratory chain that generates an electrochemical potential coupled to ATP synthesis. c1 functions as an electron donor to cytochrome c. This chain is Cytochrome c1 (petC), found in Rhodobacter capsulatus (strain ATCC BAA-309 / NBRC 16581 / SB1003).